Reading from the N-terminus, the 290-residue chain is Thioredoxin-like protein 1 (290 aa).

In terms of domain architecture, Thioredoxin spans 24–104; it reads VDCYADWCGP…PQALKEKVAL (81 aa). The cysteines at positions 31 and 34 are disulfide-linked. The region spanning 118–290 is the PITH domain; that stretch reads SSSAPVKGFA…SKGKLQKVEA (173 aa).

It is found in the cytoplasm. The protein resides in the nucleus. Has a role in cellular detoxification of alkyl hydroperoxide. This is Thioredoxin-like protein 1 (txl1) from Schizosaccharomyces pombe (strain 972 / ATCC 24843) (Fission yeast).